A 714-amino-acid polypeptide reads, in one-letter code: MGSRESHLYEKPSEKLEEFIQNHLRPSEDCQKDIDQSVDTICEVLQEPCPSLTVTGVAKGGSYGRRTVLRGNSDGILVVFFGDLEQFQDQEKRQYELLSKIWAQMKHCESTWKLAAKMELQNTNRSSRVTIQLSTKQQSITFNVLPAFNALGLSEKSSLWSYRELKRSLDMVKARPGEFSVCFTELQEKFFSNYPSKLKDLILLVKHWFQKCQEKLINSSLLPPYALELLTVYAWEQGCGAEDFDMAEGVRTVLRLIEKQEQLCVYWTVNYNFGDEIVRNILLSQLQAPRPVILDPTDPTNNVSMDNTCWLQLKHEAQNWLRSLRQNESPGPSWNVLPASLYITPGHLLDKFVKDFLQPNQTFQDQIKKALKIICSFLEENCFRHSTTKIQVIQGGSTVKGTALKTGSDASLVVFANSLKSYTSPKNERYNIIKEIHEQLEACRQEKDFEVKFEISKWKPPWVLSFTLKSKVLNESVDFDVLPAFNALGELKSGSTPSPRTYTELIHLYKPSDVFLEGEFSACFTKLQRNFVRSLPLKLKDLIRLLKHWYCGCEKKLKQKGSLPPKYALELLSIYAWEKGSGAQDFDMAEGFRTVLELVIQYQHLCVFWTVNYSFDDEILRNFLLGQIRRTRPVILDPADPTGDVGGGHRWCWHLLAKEATEWLSSLCFKDKSGCPIQPWNVPKKRVQTPGSCGAGIYSMVNEMHLLRSHRFLD.

Residue Gly-2 is the site of N-myristoyl glycine attachment. 2 OAS domain regions span residues 11 to 336 (KPSE…SWNV) and 344 to 683 (TPGH…WNVP). Ser-397 is an ATP binding site. Residues Asp-409 and Asp-480 each contribute to the Mg(2+) site. ATP contacts are provided by Arg-544 and Lys-547.

It belongs to the 2-5A synthase family. As to quaternary structure, homodimer. Mg(2+) serves as cofactor. Myristoylation is not essential for its activity. In terms of processing, glycosylated. Glycosylation is essential for its activity.

The protein resides in the cytoplasm. Its subcellular location is the perinuclear region. It carries out the reaction 3 ATP = 5'-triphosphoadenylyl-(2'-&gt;5')-adenylyl-(2'-&gt;5')-adenosine + 2 diphosphate. With respect to regulation, produced as a latent enzyme which is activated by double stranded RNA (dsRNA) generated during the course of viral infection. The dsRNA activator must be at least 15 nucleotides long, and no modification of the 2'-hydroxyl group is tolerated. ssRNA or dsDNA do not act as activators. Strongly inhibited by copper, iron and zinc ions. Partially inhibited by cobalt and nickel ions. In terms of biological role, interferon-induced, dsRNA-activated antiviral enzyme which plays a critical role in cellular innate antiviral response. Activated by detection of double stranded RNA (dsRNA): polymerizes higher oligomers of 2'-5'-oligoadenylates (2-5A) from ATP which then bind to the inactive monomeric form of ribonuclease L (RNASEL) leading to its dimerization and subsequent activation. Activation of RNASEL leads to degradation of cellular as well as viral RNA, resulting in the inhibition of protein synthesis, thus terminating viral replication. Can mediate the antiviral effect via the classical RNASEL-dependent pathway or an alternative antiviral pathway independent of RNASEL. In addition, it may also play a role in other cellular processes such as apoptosis, cell growth, differentiation and gene regulation. May act as a negative regulator of lactation, stopping lactation in virally infected mammary gland lobules, thereby preventing transmission of viruses to neonates. Non-infected lobules would not be affected, allowing efficient pup feeding during infection. This chain is 2'-5'-oligoadenylate synthase 2 (OAS2), found in Bos taurus (Bovine).